We begin with the raw amino-acid sequence, 585 residues long: Epithelial sodium channel subunit gamma (585 aa).

At 1-55 the chain is on the cytoplasmic side; sequence MAPGEKIKAKIKKNLPVTGPQAPTIKELMRWYCLNTNTHGCRRIVVSRGRLRRLL. Residues 56–76 form a helical membrane-spanning segment; it reads WIGFTLTAVALILWQCALLVF. At 77–477 the chain is on the extracellular side; sequence SFYTVSVSIK…GGQLGLWMSC (401 aa). Cystine bridges form between cysteine 100–cysteine 219, cysteine 308–cysteine 393, cysteine 330–cysteine 389, cysteine 334–cysteine 385, cysteine 343–cysteine 370, and cysteine 345–cysteine 359. N-linked (GlcNAc...) asparagine glycosylation occurs at asparagine 207. N-linked (GlcNAc...) asparagine glycosylation is present at asparagine 433. The helical transmembrane segment at 478–498 threads the bilayer; sequence SVVCVIEIIEVFFIDFFSIIA. Residues 499–585 lie on the Cytoplasmic side of the membrane; the sequence is RRQWQKAKEW…LTDTQMLDEL (87 aa). The disordered stretch occupies residues 513 to 534; that stretch reads QAPPCPEAPRSPQGQDNPALDI. The short motif at 559-563 is the PY motif; recruits WW domain-containing proteins and is thereby required for ubiquitination and inhibition of the channel by NEDD4 and NEDD4L element; it reads PPPKY.

The protein belongs to the amiloride-sensitive sodium channel (TC 1.A.6) family. SCNN1G subfamily. In terms of assembly, component of the heterotrimeric epithelial sodium channel (ENaC) composed of an alpha/SCNN1A, a beta/SCNN1B and a gamma/SCNN1G subunit. An additional delta/SCNN1D subunit can replace the alpha/SCNN1A subunit to form an alternative channel with specific properties. Interacts with WWP1 (via WW domains). Interacts with WWP2 (via WW domains); inhibits the channel. Interacts with the full-length immature form of PCSK9 (pro-PCSK9); inhibits ENaC by promoting its proteasomal degradation. Interacts with BPIFA1; the interaction is indirect via SCNN1B and inhibits the proteolytic maturation of SCNN1A and SCNN1G and the activation of ENaC. Phosphorylated on serine and threonine residues. Aldosterone and insulin increase the basal level of phosphorylation. In terms of processing, ubiquitinated. Can be ubiquitinated at multiple sites and undergo monoubiquitination and polyubiquitination. Ubiquitination by NEDD4 or NEDD4L inhibits the ENaC channel through endocytosis, intracellular retention and degradation of its individual subunits. Post-translationally, ENaC is activated through the proteolytic maturation of its subunits. Furin cleaves the SCNN1G subunit first, followed by cleavage by prostasin (PRSS8), which results in a stepwise increase in the open probability of the channel due to the release of an inhibitory tract. BPIFA1, which is recruited by the SCNN1B subunit, prevents the proteolytic activation of ENaC. N-glycosylated. N-linked glycans are processed to complex type during ENaC complex assembly and transport to the plasma membrane.

Its subcellular location is the apical cell membrane. It catalyses the reaction Na(+)(in) = Na(+)(out). Its activity is regulated as follows. Originally identified and characterized by its inhibition by the diuretic drug amiloride. Functionally, this is one of the three pore-forming subunits of the heterotrimeric epithelial sodium channel (ENaC), a critical regulator of sodium balance and fluid homeostasis. ENaC operates in epithelial tissues, where it mediates the electrodiffusion of sodium ions from extracellular fluid through the apical membrane of cells, with water following osmotically. It plays a key role in maintaining sodium homeostasis through electrogenic sodium reabsorption in the kidneys. Additionally, ENaC is essential for airway surface liquid homeostasis, which is crucial for proper mucus clearance. This chain is Epithelial sodium channel subunit gamma, found in Pan troglodytes (Chimpanzee).